The sequence spans 366 residues: Endophilin-A (366 aa).

The BAR domain occupies 18-248 (TEKMGGAEGT…LQEKRSEAES (231 aa)). Positions 227-247 (QCADVLRGLQETLQEKRSEAE) form a coiled coil. Residues 266–295 (GGGGGLNEDGTPSHISSSASPLPSPMRSPA) are disordered. Over residues 277 to 294 (PSHISSSASPLPSPMRSP) the composition is skewed to low complexity. One can recognise an SH3 domain in the interval 305 to 364 (QQQPCCQALYDFDPENPGELGFKENDIITLLNRVDDNWYEGSVNGRTGYFPQSYVQVQVP).

Belongs to the endophilin family.

Its subcellular location is the cytoplasm. It localises to the membrane. Required presynaptically at the neuromuscular junction. Implicated in synaptic vesicle endocytosis. In Drosophila willistoni (Fruit fly), this protein is Endophilin-A.